Here is a 67-residue protein sequence, read N- to C-terminus: DNA-directed RNA polymerase subunit omega (67 aa).

Belongs to the RNA polymerase subunit omega family. As to quaternary structure, the RNAP catalytic core consists of 2 alpha, 1 beta, 1 beta' and 1 omega subunit. When a sigma factor is associated with the core the holoenzyme is formed, which can initiate transcription.

It catalyses the reaction RNA(n) + a ribonucleoside 5'-triphosphate = RNA(n+1) + diphosphate. In terms of biological role, promotes RNA polymerase assembly. Latches the N- and C-terminal regions of the beta' subunit thereby facilitating its interaction with the beta and alpha subunits. The sequence is that of DNA-directed RNA polymerase subunit omega from Burkholderia multivorans (strain ATCC 17616 / 249).